A 283-amino-acid polypeptide reads, in one-letter code: Bifunctional protein FolD (283 aa).

NADP(+) contacts are provided by residues 165-167 (GRS) and Ser-190.

This sequence belongs to the tetrahydrofolate dehydrogenase/cyclohydrolase family. In terms of assembly, homodimer.

The catalysed reaction is (6R)-5,10-methylene-5,6,7,8-tetrahydrofolate + NADP(+) = (6R)-5,10-methenyltetrahydrofolate + NADPH. It catalyses the reaction (6R)-5,10-methenyltetrahydrofolate + H2O = (6R)-10-formyltetrahydrofolate + H(+). The protein operates within one-carbon metabolism; tetrahydrofolate interconversion. Catalyzes the oxidation of 5,10-methylenetetrahydrofolate to 5,10-methenyltetrahydrofolate and then the hydrolysis of 5,10-methenyltetrahydrofolate to 10-formyltetrahydrofolate. The protein is Bifunctional protein FolD of Paracidovorax citrulli (strain AAC00-1) (Acidovorax citrulli).